Here is an 891-residue protein sequence, read N- to C-terminus: Translation initiation factor IF-2 (891 aa).

Positions 50–303 (KKEHGSADES…TSMQHGFDKS (254 aa)) are disordered. Composition is skewed to basic and acidic residues over residues 102–237 (TLEE…KTAD) and 245–261 (HARE…EQQP). One can recognise a tr-type G domain in the interval 390–559 (GRAPVVTIMG…LLQSEVLELT (170 aa)). The tract at residues 399-406 (GHVDHGKT) is G1. Residue 399–406 (GHVDHGKT) coordinates GTP. Positions 424 to 428 (GITQH) are G2. The tract at residues 445–448 (DTPG) is G3. Residues 445–449 (DTPGH) and 499–502 (NKID) contribute to the GTP site. The segment at 499-502 (NKID) is G4. The G5 stretch occupies residues 535–537 (SAK).

This sequence belongs to the TRAFAC class translation factor GTPase superfamily. Classic translation factor GTPase family. IF-2 subfamily.

The protein localises to the cytoplasm. In terms of biological role, one of the essential components for the initiation of protein synthesis. Protects formylmethionyl-tRNA from spontaneous hydrolysis and promotes its binding to the 30S ribosomal subunits. Also involved in the hydrolysis of GTP during the formation of the 70S ribosomal complex. The polypeptide is Translation initiation factor IF-2 (Aliivibrio salmonicida (strain LFI1238) (Vibrio salmonicida (strain LFI1238))).